The following is a 1556-amino-acid chain: Ras guanine nucleotide exchange factor G (1556 aa).

4 disordered regions span residues Ile19–Gly63, Leu93–Thr141, Ser163–Ser239, and Ala254–Ser296. Low complexity-rich tracts occupy residues Asn25–Asn54 and Asn96–Thr141. Acidic residues predominate over residues Asp170 to Ser186. Low complexity predominate over residues Thr196 to Ser216. Residues Asp256–Val271 are compositionally biased toward polar residues. Residues Asp279–Asn295 show a composition bias toward low complexity. The region spanning Asn307–Leu353 is the F-box 1 domain. Positions Asn385–Asn416 are disordered. The 48-residue stretch at Val679 to Leu726 folds into the F-box 2 domain. Disordered regions lie at residues Gln762 to Asn815 and Gly827 to Asn1101. Positions Gly827–Gly848 are enriched in low complexity. Gly residues predominate over residues Ser849–Ser866. 2 stretches are compositionally biased toward low complexity: residues Asn867–Ser880 and Phe888–Thr910. Polar residues predominate over residues Asn911–Val935. 2 stretches are compositionally biased toward low complexity: residues Ser943–Ser957 and Pro972–Ile1053. Positions Val1059–Ala1076 are enriched in polar residues. A compositionally biased stretch (low complexity) spans Asn1077–Asn1101. Residues Met1116–Ser1244 enclose the N-terminal Ras-GEF domain. Residues Ile1254–Gly1279 form a disordered region. A compositionally biased stretch (gly residues) spans Lys1264 to Gly1279. The Ras-GEF domain maps to Pro1317–Arg1548.

Functionally, promotes the exchange of Ras-bound GDP by GTP. This Dictyostelium discoideum (Social amoeba) protein is Ras guanine nucleotide exchange factor G (gefG).